A 295-amino-acid polypeptide reads, in one-letter code: Ribosomal protein L11 methyltransferase (295 aa).

Residues threonine 150, glycine 171, aspartate 193, and asparagine 232 each coordinate S-adenosyl-L-methionine.

The protein belongs to the methyltransferase superfamily. PrmA family.

It is found in the cytoplasm. The catalysed reaction is L-lysyl-[protein] + 3 S-adenosyl-L-methionine = N(6),N(6),N(6)-trimethyl-L-lysyl-[protein] + 3 S-adenosyl-L-homocysteine + 3 H(+). Methylates ribosomal protein L11. The sequence is that of Ribosomal protein L11 methyltransferase from Neisseria meningitidis serogroup C / serotype 2a (strain ATCC 700532 / DSM 15464 / FAM18).